Consider the following 88-residue polypeptide: Small ribosomal subunit protein bS20 (88 aa).

Belongs to the bacterial ribosomal protein bS20 family.

Its function is as follows. Binds directly to 16S ribosomal RNA. The protein is Small ribosomal subunit protein bS20 of Micrococcus luteus (strain ATCC 4698 / DSM 20030 / JCM 1464 / CCM 169 / CCUG 5858 / IAM 1056 / NBRC 3333 / NCIMB 9278 / NCTC 2665 / VKM Ac-2230) (Micrococcus lysodeikticus).